We begin with the raw amino-acid sequence, 493 residues long: Cytochrome P450 monooxygenase olcG (493 aa).

A helical membrane pass occupies residues 15 to 35 (GILATGALVIFVALFLATFQF). Residue cysteine 429 coordinates heme.

It belongs to the cytochrome P450 family. Heme serves as cofactor.

It is found in the membrane. Its pathway is secondary metabolite biosynthesis; terpenoid biosynthesis. Cytochrome P450 monooxygenase; part of the gene cluster that mediates the biosynthesis of 15-deoxyoxalicine B. The first step of the pathway is the synthesis of nicotinyl-CoA from nicotinic acid by the nicotinic acid-CoA ligase olcI. Nicotinyl-CoA is then a substrate of polyketide synthase olcA to produce 4-hydroxy-6-(3-pyridinyl)-2H-pyran-2-one (HPPO) which is further prenylated by the polyprenyl transferase olcH to yield geranylgeranyl-HPPO. Geranylgeranyl pyrophosphate is provided by the cluster-specific geranylgeranyl pyrophosphate synthase olcC. The FAD-dependent monooxygenase olcE catalyzes the epoxidation of geranylgeranyl-HPPO and the terpene cyclase olcD catalyzes the cyclization of the terpenoid component, resulting in the formation of the tricyclic terpene moiety seen in predecaturin E. The cytochrome P450 monooxygenase then catalyzes the allylic oxidation of predecaturin E, which is followed by spirocylization with concomitant loss of one molecule of water to form decaturin E. Decaturin E is the substrate of the cytochrome P450 monooxygenase olcJ which hydroxylates it at the C-29 position to form decaturin F. The short-chain dehydrogenase/reductase olcF may catalyze the oxidation of decaturin F to generate the 29-hydroxyl-27-one intermediate, and subsequent hemiacetal formation probably leads to the formation of decaturin C. The dioxygenase olcK may be a peroxisomal enzyme that catalyzes the hydroxylation of decaturin C into decaturin A once decaturin C is shuttled into the peroxisome by the MFS transporter olcL. Finally the cytochrome P450 monooxygenase olcB catalyzes the oxidative rearrangement to yield 15-deoxyoxalicine B. In the absence of olcJ, decaturin E may be shunted to a pathway in which it is oxidized to a ketone, possibly by olcF, to form decaturin D, which undergoes further allylic oxidation to yield decaturin G. Moreover, in the absence of oclK or oclL, oclB can convert decaturin C into 15-deoxyoxalicine A. The protein is Cytochrome P450 monooxygenase olcG of Penicillium canescens.